The chain runs to 423 residues: tRNA(Ile)-lysidine synthase (423 aa).

27–32 contacts ATP; it reads SGGVDS.

Belongs to the tRNA(Ile)-lysidine synthase family.

The protein localises to the cytoplasm. It catalyses the reaction cytidine(34) in tRNA(Ile2) + L-lysine + ATP = lysidine(34) in tRNA(Ile2) + AMP + diphosphate + H(+). Functionally, ligates lysine onto the cytidine present at position 34 of the AUA codon-specific tRNA(Ile) that contains the anticodon CAU, in an ATP-dependent manner. Cytidine is converted to lysidine, thus changing the amino acid specificity of the tRNA from methionine to isoleucine. The polypeptide is tRNA(Ile)-lysidine synthase (Streptococcus mutans serotype c (strain ATCC 700610 / UA159)).